We begin with the raw amino-acid sequence, 579 residues long: Insulin-like growth factor 2 mRNA-binding protein 3 (579 aa).

2 consecutive RRM domains span residues 2–75 and 81–156; these read NKLY…HSVP and RKLQ…YIPD. The disordered stretch occupies residues 160 to 192; it reads AQQNPLQQPRGRRGLGQRGSSRQGSPGSVSKQK. Positions 177–187 are enriched in low complexity; it reads RGSSRQGSPGS. Serine 184 bears the Phosphoserine mark. 3 consecutive KH domains span residues 195-260, 276-343, and 405-470; these read DLPL…CKSI, EIPL…EEEI, and TETV…QGRI. Residues lysine 450 and lysine 475 each participate in a glycyl lysine isopeptide (Lys-Gly) (interchain with G-Cter in SUMO2) cross-link. Residues 487 to 553 enclose the KH 4 domain; that stretch reads KLEAHIRVPS…YACQVAQRKI (67 aa). Threonine 528 bears the Phosphothreonine mark.

The protein belongs to the RRM IMP/VICKZ family. As to quaternary structure, can form homooligomers and heterooligomers with IGF2BP1 and IGF2BP3 in an RNA-dependent manner. Interacts with IGF2BP1. Interacts with ELAVL1, DHX9, HNRNPU, MATR3 and PABPC1. Expressed in fetal liver, fetal lung, fetal kidney, fetal thymus, fetal placenta, fetal follicles of ovary and gonocytes of testis, growing oocytes, spermatogonia and semen (at protein level). Expressed in cervix adenocarcinoma, in testicular, pancreatic and renal-cell carcinomas (at protein level). Expressed ubiquitously during fetal development at 8 and 14 weeks of gestation. Expressed in ovary, testis, brain, placenta, pancreatic cancer tissues and pancreatic cancer cell lines.

It is found in the nucleus. It localises to the cytoplasm. The protein resides in the P-body. Its subcellular location is the stress granule. Functionally, RNA-binding factor that may recruit target transcripts to cytoplasmic protein-RNA complexes (mRNPs). This transcript 'caging' into mRNPs allows mRNA transport and transient storage. It also modulates the rate and location at which target transcripts encounter the translational apparatus and shields them from endonuclease attacks or microRNA-mediated degradation. Preferentially binds to N6-methyladenosine (m6A)-containing mRNAs and increases their stability. Binds to the 3'-UTR of CD44 mRNA and stabilizes it, hence promotes cell adhesion and invadopodia formation in cancer cells. Binds to beta-actin/ACTB and MYC transcripts. Increases MYC mRNA stability by binding to the coding region instability determinant (CRD) and binding is enhanced by m6A-modification of the CRD. Binds to the 5'-UTR of the insulin-like growth factor 2 (IGF2) mRNAs. The sequence is that of Insulin-like growth factor 2 mRNA-binding protein 3 (IGF2BP3) from Homo sapiens (Human).